Here is a 389-residue protein sequence, read N- to C-terminus: Putative phosphoserine aminotransferase (389 aa).

R45 contacts L-glutamate. Residues 79–80 (GT), W114, T169, D191, and Q214 each bind pyridoxal 5'-phosphate. Residue K215 is modified to N6-(pyridoxal phosphate)lysine. 265–266 (NT) contributes to the pyridoxal 5'-phosphate binding site.

It belongs to the class-V pyridoxal-phosphate-dependent aminotransferase family. SerC subfamily. In terms of assembly, homodimer. Pyridoxal 5'-phosphate serves as cofactor.

It carries out the reaction O-phospho-L-serine + 2-oxoglutarate = 3-phosphooxypyruvate + L-glutamate. The catalysed reaction is 4-(phosphooxy)-L-threonine + 2-oxoglutarate = (R)-3-hydroxy-2-oxo-4-phosphooxybutanoate + L-glutamate. It functions in the pathway amino-acid biosynthesis; L-serine biosynthesis; L-serine from 3-phospho-D-glycerate: step 2/3. It participates in cofactor biosynthesis; pyridoxine 5'-phosphate biosynthesis; pyridoxine 5'-phosphate from D-erythrose 4-phosphate: step 3/5. Catalyzes the reversible conversion of 3-phosphohydroxypyruvate to phosphoserine and of 3-hydroxy-2-oxo-4-phosphonooxybutanoate to phosphohydroxythreonine. This Schizosaccharomyces pombe (strain 972 / ATCC 24843) (Fission yeast) protein is Putative phosphoserine aminotransferase.